Here is a 389-residue protein sequence, read N- to C-terminus: SH3 and F-BAR domain-containing protein DDB_G0274695 (389 aa).

The 256-residue stretch at 3-258 folds into the F-BAR domain; that stretch reads EQFKDNFWGP…VITQIDKLED (256 aa). Residues 119-192 are a coiled coil; that stretch reads KLNKERKDME…QDYRDSVNKL (74 aa). Low complexity predominate over residues 300–328; it reads LTSSVSSNSLTSSYNSATTTPTPAPRSTP. A disordered region spans residues 300-329; that stretch reads LTSSVSSNSLTSSYNSATTTPTPAPRSTPI. An SH3 domain is found at 332–389; the sequence is SKKKQAKALYDYVGSDATELDFFAGDIITILDEDESGWFRGELGDRIGLYPSNYCEPI.

The chain is SH3 and F-BAR domain-containing protein DDB_G0274695 from Dictyostelium discoideum (Social amoeba).